A 124-amino-acid chain; its full sequence is UPF0299 membrane protein VIBHAR_02118 (124 aa).

4 consecutive transmembrane segments (helical) span residues 6 to 26 (LLQLVHLLISLALIMGALGIG), 35 to 55 (VSVPGSVIGMLVLFFSMTLGL), 72 to 92 (MILLFVPISVGLMQHFDMLLA), and 95 to 115 (LPIIASAVGGSLIVLISLAWF).

It belongs to the UPF0299 family.

The protein localises to the cell inner membrane. This chain is UPF0299 membrane protein VIBHAR_02118, found in Vibrio campbellii (strain ATCC BAA-1116).